A 345-amino-acid chain; its full sequence is MPITPQEALQRTIEHREIFHDEMVGLMRQIMRGEVSDMMVAAILTGLRVKKETIGEIAGAATVMREFSRRVDVSDHQHMVDIVGTGGDGSHTFNISTCAMFVAAAGGAKVAKHGNRSVSSKSGSADALEALGAVIELQPEQVADALAQTGIGFMYAPLHHPSMKVVAPVRREMGVRTIFNILGPLTNPAGSPNILMGVFHPDLVGIQARVLQELGAERALVVWGRDGMDELSLGAGTLVGELRDGQVREYEVHPEDFGIAMSASRNLKVADAAQSRAMLLRVLDNVPGPALDIVALNAGAALYVAGLAGSIADGVLRARAVLADGSARARLDAYVAYTHQLAGQP.

Residues Gly84, 87-88, Thr92, 94-97, 112-120, and Ser124 each bind 5-phospho-alpha-D-ribose 1-diphosphate; these read GD, NIST, and KHGNRSVSS. Gly84 contributes to the anthranilate binding site. Mg(2+) is bound at residue Ser96. Residue Asn115 coordinates anthranilate. Residue Arg170 coordinates anthranilate. Mg(2+) contacts are provided by Asp229 and Glu230.

The protein belongs to the anthranilate phosphoribosyltransferase family. Homodimer. It depends on Mg(2+) as a cofactor.

It carries out the reaction N-(5-phospho-beta-D-ribosyl)anthranilate + diphosphate = 5-phospho-alpha-D-ribose 1-diphosphate + anthranilate. It participates in amino-acid biosynthesis; L-tryptophan biosynthesis; L-tryptophan from chorismate: step 2/5. In terms of biological role, catalyzes the transfer of the phosphoribosyl group of 5-phosphorylribose-1-pyrophosphate (PRPP) to anthranilate to yield N-(5'-phosphoribosyl)-anthranilate (PRA). The polypeptide is Anthranilate phosphoribosyltransferase (Xanthomonas oryzae pv. oryzae (strain MAFF 311018)).